The primary structure comprises 83 residues: RNA-binding protein Hfq (83 aa).

The 61-residue stretch at 10 to 70 (DTFLNQVRKE…ISTVMPLRPI (61 aa)) folds into the Sm domain.

This sequence belongs to the Hfq family. As to quaternary structure, homohexamer.

RNA chaperone that binds small regulatory RNA (sRNAs) and mRNAs to facilitate mRNA translational regulation in response to envelope stress, environmental stress and changes in metabolite concentrations. Also binds with high specificity to tRNAs. The chain is RNA-binding protein Hfq from Desulfitobacterium hafniense (strain DSM 10664 / DCB-2).